The primary structure comprises 316 residues: Pantothenate kinase (316 aa).

G95–S102 contacts ATP.

The protein belongs to the prokaryotic pantothenate kinase family.

It localises to the cytoplasm. The enzyme catalyses (R)-pantothenate + ATP = (R)-4'-phosphopantothenate + ADP + H(+). It functions in the pathway cofactor biosynthesis; coenzyme A biosynthesis; CoA from (R)-pantothenate: step 1/5. This is Pantothenate kinase from Yersinia enterocolitica serotype O:8 / biotype 1B (strain NCTC 13174 / 8081).